A 216-amino-acid polypeptide reads, in one-letter code: Orotate phosphoribosyltransferase (216 aa).

5-phospho-alpha-D-ribose 1-diphosphate is bound by residues R100, K104, H106, and 126 to 134; that span reads EDLISTGGS. S130 contacts orotate.

Belongs to the purine/pyrimidine phosphoribosyltransferase family. PyrE subfamily. Homodimer. Interacts with BrxC. Mg(2+) is required as a cofactor.

It catalyses the reaction orotidine 5'-phosphate + diphosphate = orotate + 5-phospho-alpha-D-ribose 1-diphosphate. The protein operates within pyrimidine metabolism; UMP biosynthesis via de novo pathway; UMP from orotate: step 1/2. Functionally, catalyzes the transfer of a ribosyl phosphate group from 5-phosphoribose 1-diphosphate to orotate, leading to the formation of orotidine monophosphate (OMP). This Bacillus subtilis (strain 168) protein is Orotate phosphoribosyltransferase.